A 491-amino-acid polypeptide reads, in one-letter code: Tryptophan 5-hydroxylase 2 (491 aa).

Serine 19 is modified (phosphoserine). Residues 33–63 (NLTVNKSNSGKNDDKKGNKGSSRSETAPDSG) form a disordered region. Positions 66–141 (AVVFSLRNEV…TIVTLNPPEN (76 aa)) constitute an ACT domain. Histidine 319, histidine 324, and glutamate 364 together coordinate Fe cation.

The protein belongs to the biopterin-dependent aromatic amino acid hydroxylase family. As to quaternary structure, interacts with DNAJC12. Fe(2+) serves as cofactor.

The enzyme catalyses (6R)-L-erythro-5,6,7,8-tetrahydrobiopterin + L-tryptophan + O2 = 5-hydroxy-L-tryptophan + (4aS,6R)-4a-hydroxy-L-erythro-5,6,7,8-tetrahydrobiopterin. The protein operates within aromatic compound metabolism; serotonin biosynthesis; serotonin from L-tryptophan: step 1/2. The protein is Tryptophan 5-hydroxylase 2 (TPH2) of Equus caballus (Horse).